Reading from the N-terminus, the 117-residue chain is uncharacterized protein (117 aa).

The N-terminal stretch at 1 to 22 is a signal peptide; the sequence is MHVKYLAGIVGAALLMAGCSSS.

This is an uncharacterized protein from Escherichia coli O6:H1 (strain CFT073 / ATCC 700928 / UPEC).